We begin with the raw amino-acid sequence, 123 residues long: Small ribosomal subunit protein eS8 (123 aa).

The disordered stretch occupies residues 1–37 (MKDQGRSTRKRTGGRLKHASNKKRHQLGREPAETTVG). Residues 7-26 (STRKRTGGRLKHASNKKRHQ) are compositionally biased toward basic residues.

Belongs to the eukaryotic ribosomal protein eS8 family. As to quaternary structure, part of the 30S ribosomal subunit.

This Halorubrum lacusprofundi (strain ATCC 49239 / DSM 5036 / JCM 8891 / ACAM 34) protein is Small ribosomal subunit protein eS8.